The primary structure comprises 431 residues: Putative malic acid transport protein (431 aa).

The next 10 helical transmembrane spans lie at Phe-30–Leu-50, Gly-62–Phe-82, Val-101–Tyr-121, Ile-136–Leu-156, Ile-167–Ala-187, Val-201–Val-221, Gly-239–Phe-259, Phe-284–Val-304, Val-318–Gly-338, and Val-346–Leu-366. Residues Glu-402 to Arg-424 are compositionally biased toward basic and acidic residues. Residues Glu-402–Leu-431 form a disordered region.

This sequence belongs to the tellurite-resistance/dicarboxylate transporter (TDT) family.

It is found in the membrane. The protein is Putative malic acid transport protein of Schizosaccharomyces pombe (strain 972 / ATCC 24843) (Fission yeast).